Reading from the N-terminus, the 116-residue chain is Large ribosomal subunit protein eL31 (116 aa).

The protein belongs to the eukaryotic ribosomal protein eL31 family.

This is Large ribosomal subunit protein eL31 (RPL31) from Chlamydomonas reinhardtii (Chlamydomonas smithii).